The primary structure comprises 347 residues: Metacaspase-2 (347 aa).

Positions 1–70 (MCSLITQLCD…QPWVATPLPG (70 aa)) are regulates substrate access to the active site. Histidine 158 is a catalytic residue. 3 residues coordinate Ca(2+): aspartate 173, aspartate 189, and aspartate 190. Residue cysteine 213 is part of the active site. Aspartate 220 is a binding site for Ca(2+).

It belongs to the peptidase C14B family. As to quaternary structure, monomer. Post-translationally, auto-proteolytic cleavage of the propeptide after Lys-55 and between the large and small subunits after Lys-268 is required for catalytic activity towards large protein substrates but is dispensable towards small oligopeptide substrates. After processing, the propeptide and the large and small subunits remain associated by non-covalent bonds. In vivo, the unprocessed enzyme appears to be the predominant form.

The protein resides in the recycling endosome. With respect to regulation, activated by Ca(2+). In response to calcium binding, the 280-loop, the 280-loop, a disordered loop consisting of residues 269-275, undergoes a conformational change which stabilizes substrates in the active site. The binding to the substrate triggers the release of the N-terminal region resulting in the activation of the enzyme. Proteolytic cleavage is required for catalytic activity towards large protein substrates. In terms of biological role, cysteine protease that cleaves specifically after arginine or lysine residues. This chain is Metacaspase-2, found in Trypanosoma brucei brucei.